Reading from the N-terminus, the 365-residue chain is Protein RecA (365 aa).

An ATP-binding site is contributed by Gly73 to Thr80.

It belongs to the RecA family.

Its subcellular location is the cytoplasm. Its function is as follows. Can catalyze the hydrolysis of ATP in the presence of single-stranded DNA, the ATP-dependent uptake of single-stranded DNA by duplex DNA, and the ATP-dependent hybridization of homologous single-stranded DNAs. It interacts with LexA causing its activation and leading to its autocatalytic cleavage. In Prochlorococcus marinus (strain MIT 9215), this protein is Protein RecA.